A 212-amino-acid polypeptide reads, in one-letter code: Pyridoxine/pyridoxamine 5'-phosphate oxidase (212 aa).

Residues 61-66 (RTVLLK), 76-77 (FT), Lys-82, Lys-83, and Gln-105 each bind FMN. Residue Lys-66 participates in substrate binding. Tyr-123, Arg-127, and Ser-131 together coordinate substrate. FMN is bound by residues 140–141 (QS) and Trp-185. 191 to 193 (RLH) is a binding site for substrate. Arg-195 provides a ligand contact to FMN.

The protein belongs to the pyridoxamine 5'-phosphate oxidase family. In terms of assembly, homodimer. Requires FMN as cofactor.

It carries out the reaction pyridoxamine 5'-phosphate + O2 + H2O = pyridoxal 5'-phosphate + H2O2 + NH4(+). It catalyses the reaction pyridoxine 5'-phosphate + O2 = pyridoxal 5'-phosphate + H2O2. It functions in the pathway cofactor metabolism; pyridoxal 5'-phosphate salvage; pyridoxal 5'-phosphate from pyridoxamine 5'-phosphate: step 1/1. Its pathway is cofactor metabolism; pyridoxal 5'-phosphate salvage; pyridoxal 5'-phosphate from pyridoxine 5'-phosphate: step 1/1. Catalyzes the oxidation of either pyridoxine 5'-phosphate (PNP) or pyridoxamine 5'-phosphate (PMP) into pyridoxal 5'-phosphate (PLP). In Vesicomyosocius okutanii subsp. Calyptogena okutanii (strain HA), this protein is Pyridoxine/pyridoxamine 5'-phosphate oxidase.